We begin with the raw amino-acid sequence, 218 residues long: Ribose-5-phosphate isomerase A (218 aa).

Substrate is bound by residues 28 to 31 (TGST), 81 to 84 (DGAD), and 94 to 97 (KGGG). Glu103 (proton acceptor) is an active-site residue. Lys121 is a substrate binding site.

This sequence belongs to the ribose 5-phosphate isomerase family. In terms of assembly, homodimer.

It catalyses the reaction aldehydo-D-ribose 5-phosphate = D-ribulose 5-phosphate. It participates in carbohydrate degradation; pentose phosphate pathway; D-ribose 5-phosphate from D-ribulose 5-phosphate (non-oxidative stage): step 1/1. In terms of biological role, catalyzes the reversible conversion of ribose-5-phosphate to ribulose 5-phosphate. The sequence is that of Ribose-5-phosphate isomerase A from Sodalis glossinidius (strain morsitans).